We begin with the raw amino-acid sequence, 527 residues long: MTHNDDDHKWVTTKRKEPIFFTVILFIFQIFMIICFAALTGYDTNKNYTGSENPDEFKGGEVQERVNNFYGYFRDINIMIFFGFGFLMTFLRRYGYSALGYTFIISALVSQWSVLLNGFFEAWSHSNKHGEFPSTWEFSMDSLLQGFFCSGSVMISYGAILGRVTPLHMLIMGIIEPIFFFLNVFIGEMNLEAIDVGGGMYIHLFGSVFGLTVAWFLTDRKSKECTDNAPSYSGDNFAMAGTLFLWMMWPSFNAAIAPLGEPQFRAIANTFLSLTGSTVATFIVSRLFSHLGNKLDMVHVQNSSLAGGVVQGCIAHMNINPGGAIAMGFIAGTISVCGYLFITPKVQRKLHIQDTCGILNLHCIPGFLGSIAAIFAAIKGLNNPNMYSKVEFEQIFRAGDSQASANLIATMVSIGLGIVGGLLVGVILLQLKKIKGLKSKEYYQDSAFWILPIDYPKDVATVVALNNAATSEDTAGGDDEEEGVGKEHGAVEMGKHNRIVQPKQDNKYHKQLPSDDEEEDEFKQEPI.

The Cytoplasmic portion of the chain corresponds to 1–18; sequence MTHNDDDHKWVTTKRKEP. The helical transmembrane segment at 19 to 39 threads the bilayer; it reads IFFTVILFIFQIFMIICFAAL. Residues 40 to 70 are Extracellular-facing; the sequence is TGYDTNKNYTGSENPDEFKGGEVQERVNNFY. A glycan (N-linked (GlcNAc...) asparagine) is linked at asparagine 47. The helical transmembrane segment at 71-91 threads the bilayer; that stretch reads GYFRDINIMIFFGFGFLMTFL. Over 92–99 the chain is Cytoplasmic; it reads RRYGYSAL. The chain crosses the membrane as a helical span at residues 100–120; that stretch reads GYTFIISALVSQWSVLLNGFF. The Extracellular segment spans residues 121–141; that stretch reads EAWSHSNKHGEFPSTWEFSMD. The helical transmembrane segment at 142-162 threads the bilayer; that stretch reads SLLQGFFCSGSVMISYGAILG. The Cytoplasmic segment spans residues 163 to 166; it reads RVTP. A helical transmembrane segment spans residues 167-187; that stretch reads LHMLIMGIIEPIFFFLNVFIG. Residues 188–195 are Extracellular-facing; that stretch reads EMNLEAID. The chain crosses the membrane as a helical span at residues 196–216; that stretch reads VGGGMYIHLFGSVFGLTVAWF. The Cytoplasmic segment spans residues 217–236; the sequence is LTDRKSKECTDNAPSYSGDN. The helical transmembrane segment at 237-257 threads the bilayer; that stretch reads FAMAGTLFLWMMWPSFNAAIA. Residues 258–263 lie on the Extracellular side of the membrane; sequence PLGEPQ. A helical membrane pass occupies residues 264–284; that stretch reads FRAIANTFLSLTGSTVATFIV. At 285 to 299 the chain is on the cytoplasmic side; that stretch reads SRLFSHLGNKLDMVH. The helical transmembrane segment at 300–319 threads the bilayer; it reads VQNSSLAGGVVQGCIAHMNI. The Extracellular segment spans residues 320 to 321; the sequence is NP. The helical transmembrane segment at 322-342 threads the bilayer; the sequence is GGAIAMGFIAGTISVCGYLFI. The Cytoplasmic segment spans residues 343–357; it reads TPKVQRKLHIQDTCG. The helical transmembrane segment at 358–378 threads the bilayer; the sequence is ILNLHCIPGFLGSIAAIFAAI. Over 379-406 the chain is Extracellular; it reads KGLNNPNMYSKVEFEQIFRAGDSQASAN. Residues 407–427 traverse the membrane as a helical segment; it reads LIATMVSIGLGIVGGLLVGVI. At 428–527 the chain is on the cytoplasmic side; sequence LLQLKKIKGL…EEDEFKQEPI (100 aa). Residues 471-527 are disordered; that stretch reads SEDTAGGDDEEEGVGKEHGAVEMGKHNRIVQPKQDNKYHKQLPSDDEEEDEFKQEPI. Residues 483 to 495 show a composition bias toward basic and acidic residues; sequence GVGKEHGAVEMGK. Positions 514-527 are enriched in acidic residues; sequence SDDEEEDEFKQEPI.

This sequence belongs to the ammonium transporter (TC 2.A.49) family. Rh subfamily. Interacts with ap1g1.

It localises to the contractile vacuole. Its subcellular location is the membrane. Its function is as follows. May be a carbon dioxide/bicarbonate transporter. This chain is Rhesus-like glycoprotein A (rhgA), found in Dictyostelium discoideum (Social amoeba).